Consider the following 42-residue polypeptide: Snaclec lebecetin subunit alpha (42 aa).

One can recognise a C-type lectin domain in the interval 1-42; the sequence is DQDCLPGWSSHEGHCYKVFNLDKTWEDAEKFCTEQPSNGHLV. Cysteine 4 and cysteine 15 form a disulfide bridge.

As to quaternary structure, heterodimer of subunits alpha and beta; disulfide-linked. Requires Ca(2+) as cofactor. In terms of processing, glycosylated. In terms of tissue distribution, expressed by the venom gland.

The protein localises to the secreted. In terms of biological role, binds to the platelet GPIb/IX/V receptor system and inhibits ristocetin-induced platelet aggregation in human platelet-rich plasma. Strongly inhibits platelet aggregation induced by ADP, calcium ionophore, thrombin and collagen. Does not inhibit U46619-induced platelet aggregation. The chain is Snaclec lebecetin subunit alpha from Macrovipera lebetinus (Levantine viper).